Reading from the N-terminus, the 312-residue chain is tRNA uridine(34) hydroxylase (312 aa).

In terms of domain architecture, Rhodanese spans 147-237 (SDRNVIFIDM…GILGYVHDAN (91 aa)). Residue Cys201 is the Cysteine persulfide intermediate of the active site.

The protein belongs to the TrhO family.

It catalyses the reaction uridine(34) in tRNA + AH2 + O2 = 5-hydroxyuridine(34) in tRNA + A + H2O. Functionally, catalyzes oxygen-dependent 5-hydroxyuridine (ho5U) modification at position 34 in tRNAs. This is tRNA uridine(34) hydroxylase from Buchnera aphidicola subsp. Schizaphis graminum (strain Sg).